The chain runs to 293 residues: Adenylyl-sulfate kinase 2, chloroplastic (293 aa).

The transit peptide at 1–59 (MEGLAIRASRPSVFCSIPGLGGDSHRKPPSDGFLKLPASSIPADSRKLVANSTSFHPIS) directs the protein to the chloroplast. 122 to 130 (GLSGSGKST) lines the ATP pocket. Substrate contacts are provided by residues aspartate 152, arginine 155, arginine 169, asparagine 172, 195–196 (IS), and glycine 245. The active-site Phosphoserine intermediate is the serine 196.

This sequence belongs to the APS kinase family. As to quaternary structure, interacts with APK1. In terms of tissue distribution, expressed in root vasculature, root tips, leaf epidermal cells and funiculus of developing seeds.

It localises to the plastid. The protein resides in the chloroplast. The catalysed reaction is adenosine 5'-phosphosulfate + ATP = 3'-phosphoadenylyl sulfate + ADP + H(+). It participates in sulfur metabolism; hydrogen sulfide biosynthesis; sulfite from sulfate: step 2/3. In terms of biological role, catalyzes the synthesis of activated sulfate. Essential for plant reproduction and viability. Required for the production of glucosinolates. The sequence is that of Adenylyl-sulfate kinase 2, chloroplastic (APK2) from Arabidopsis thaliana (Mouse-ear cress).